We begin with the raw amino-acid sequence, 286 residues long: D-tagatose-1,6-bisphosphate aldolase subunit KbaY (286 aa).

The Proton donor role is filled by aspartate 82. Zn(2+) is bound by residues histidine 83 and histidine 180. A dihydroxyacetone phosphate-binding site is contributed by glycine 181. Histidine 208 is a binding site for Zn(2+). Residues 209–211 (GAS) and 230–233 (NVAT) contribute to the dihydroxyacetone phosphate site.

The protein belongs to the class II fructose-bisphosphate aldolase family. TagBP aldolase KbaY subfamily. Homotetramer. Forms a complex with KbaZ. Zn(2+) serves as cofactor.

The enzyme catalyses D-tagatofuranose 1,6-bisphosphate = D-glyceraldehyde 3-phosphate + dihydroxyacetone phosphate. It functions in the pathway carbohydrate metabolism; D-tagatose 6-phosphate degradation; D-glyceraldehyde 3-phosphate and glycerone phosphate from D-tagatose 6-phosphate: step 2/2. Its function is as follows. Catalytic subunit of the tagatose-1,6-bisphosphate aldolase KbaYZ, which catalyzes the reversible aldol condensation of dihydroxyacetone phosphate (DHAP or glycerone-phosphate) with glyceraldehyde 3-phosphate (G3P) to produce tagatose 1,6-bisphosphate (TBP). Requires KbaZ subunit for full activity and stability. This chain is D-tagatose-1,6-bisphosphate aldolase subunit KbaY, found in Escherichia coli O45:K1 (strain S88 / ExPEC).